A 221-amino-acid polypeptide reads, in one-letter code: Germin-like protein subfamily 1 member 15 (221 aa).

The signal sequence occupies residues 1 to 21 (MKVSMSLILITFWALVTIAKA). Cysteine 31 and cysteine 48 are oxidised to a cystine. The Cupin type-1 domain occupies 62–213 (SGLNQAGITN…AFQLDVNVVK (152 aa)). Asparagine 77 carries an N-linked (GlcNAc...) asparagine glycan. Mn(2+) contacts are provided by histidine 110, histidine 112, glutamate 117, and histidine 159.

This sequence belongs to the germin family. In terms of assembly, oligomer (believed to be a pentamer but probably hexamer).

The protein resides in the secreted. Its subcellular location is the extracellular space. It is found in the apoplast. In terms of biological role, may play a role in plant defense. Probably has no oxalate oxidase activity even if the active site is conserved. This chain is Germin-like protein subfamily 1 member 15, found in Arabidopsis thaliana (Mouse-ear cress).